The chain runs to 476 residues: Aspartyl/glutamyl-tRNA(Asn/Gln) amidotransferase subunit B (476 aa).

Belongs to the GatB/GatE family. GatB subfamily. Heterotrimer of A, B and C subunits.

It carries out the reaction L-glutamyl-tRNA(Gln) + L-glutamine + ATP + H2O = L-glutaminyl-tRNA(Gln) + L-glutamate + ADP + phosphate + H(+). It catalyses the reaction L-aspartyl-tRNA(Asn) + L-glutamine + ATP + H2O = L-asparaginyl-tRNA(Asn) + L-glutamate + ADP + phosphate + 2 H(+). Allows the formation of correctly charged Asn-tRNA(Asn) or Gln-tRNA(Gln) through the transamidation of misacylated Asp-tRNA(Asn) or Glu-tRNA(Gln) in organisms which lack either or both of asparaginyl-tRNA or glutaminyl-tRNA synthetases. The reaction takes place in the presence of glutamine and ATP through an activated phospho-Asp-tRNA(Asn) or phospho-Glu-tRNA(Gln). The polypeptide is Aspartyl/glutamyl-tRNA(Asn/Gln) amidotransferase subunit B (Lacticaseibacillus paracasei (strain ATCC 334 / BCRC 17002 / CCUG 31169 / CIP 107868 / KCTC 3260 / NRRL B-441) (Lactobacillus paracasei)).